A 165-amino-acid chain; its full sequence is NADPH-dependent 7-cyano-7-deazaguanine reductase (165 aa).

C56 acts as the Thioimide intermediate in catalysis. Residue D63 is the Proton donor of the active site. Substrate-binding positions include 78–80 (VES) and 97–98 (HE).

It belongs to the GTP cyclohydrolase I family. QueF type 1 subfamily.

Its subcellular location is the cytoplasm. It catalyses the reaction 7-aminomethyl-7-carbaguanine + 2 NADP(+) = 7-cyano-7-deazaguanine + 2 NADPH + 3 H(+). Its pathway is tRNA modification; tRNA-queuosine biosynthesis. Catalyzes the NADPH-dependent reduction of 7-cyano-7-deazaguanine (preQ0) to 7-aminomethyl-7-deazaguanine (preQ1). In Bacillus cytotoxicus (strain DSM 22905 / CIP 110041 / 391-98 / NVH 391-98), this protein is NADPH-dependent 7-cyano-7-deazaguanine reductase.